The primary structure comprises 301 residues: 4-hydroxy-tetrahydrodipicolinate synthase (301 aa).

T57 serves as a coordination point for pyruvate. Catalysis depends on Y145, which acts as the Proton donor/acceptor. The active-site Schiff-base intermediate with substrate is K173. Position 213 (I213) interacts with pyruvate.

It belongs to the DapA family. Homotetramer; dimer of dimers.

The protein resides in the cytoplasm. The catalysed reaction is L-aspartate 4-semialdehyde + pyruvate = (2S,4S)-4-hydroxy-2,3,4,5-tetrahydrodipicolinate + H2O + H(+). It functions in the pathway amino-acid biosynthesis; L-lysine biosynthesis via DAP pathway; (S)-tetrahydrodipicolinate from L-aspartate: step 3/4. In terms of biological role, catalyzes the condensation of (S)-aspartate-beta-semialdehyde [(S)-ASA] and pyruvate to 4-hydroxy-tetrahydrodipicolinate (HTPA). This chain is 4-hydroxy-tetrahydrodipicolinate synthase, found in Corynebacterium diphtheriae (strain ATCC 700971 / NCTC 13129 / Biotype gravis).